The sequence spans 235 residues: dITP/XTP pyrophosphatase (235 aa).

7 to 12 (STNPGK) is a substrate binding site. D70 serves as the catalytic Proton acceptor. D70 contributes to the Mg(2+) binding site. Substrate is bound by residues S71, 180–183 (FGYD), K211, and 216–217 (HR).

It belongs to the HAM1 NTPase family. As to quaternary structure, homodimer. It depends on Mg(2+) as a cofactor.

The catalysed reaction is XTP + H2O = XMP + diphosphate + H(+). The enzyme catalyses dITP + H2O = dIMP + diphosphate + H(+). It catalyses the reaction ITP + H2O = IMP + diphosphate + H(+). Pyrophosphatase that catalyzes the hydrolysis of nucleoside triphosphates to their monophosphate derivatives, with a high preference for the non-canonical purine nucleotides XTP (xanthosine triphosphate), dITP (deoxyinosine triphosphate) and ITP. Seems to function as a house-cleaning enzyme that removes non-canonical purine nucleotides from the nucleotide pool, thus preventing their incorporation into DNA/RNA and avoiding chromosomal lesions. The polypeptide is dITP/XTP pyrophosphatase (Anaeromyxobacter dehalogenans (strain 2CP-C)).